The chain runs to 343 residues: Endoglucanase C (343 aa).

The Proton donor role is filled by Glu-140. The active-site Nucleophile is Glu-280.

It belongs to the glycosyl hydrolase 5 (cellulase A) family.

The enzyme catalyses Endohydrolysis of (1-&gt;4)-beta-D-glucosidic linkages in cellulose, lichenin and cereal beta-D-glucans.. Its pathway is glycan metabolism; cellulose degradation. In terms of biological role, this enzyme catalyzes the endohydrolysis of 1,4-beta-glucosidic linkages in cellulose, lichenin and cereal beta-D-glucans. This chain is Endoglucanase C (celC), found in Acetivibrio thermocellus (Hungateiclostridium thermocellum).